A 570-amino-acid chain; its full sequence is Protein misato homolog 1 (570 aa).

Serine 495 is subject to Phosphoserine.

This sequence belongs to the misato family. As to expression, present in all cell lines tested (at protein level). Widely expressed.

It is found in the mitochondrion outer membrane. Its subcellular location is the cytoplasm. Its function is as follows. Involved in the regulation of mitochondrial distribution and morphology. Required for mitochondrial fusion and mitochondrial network formation. The chain is Protein misato homolog 1 (MSTO1) from Homo sapiens (Human).